A 516-amino-acid polypeptide reads, in one-letter code: Keratin, type II cuticular Hb2 (516 aa).

Residues 1-118 (MSCRNFQLSP…PTVQRVKRDE (118 aa)) are head. In terms of domain architecture, IF rod spans 118-429 (EKEQIKCLNN…RLLEGEEHRL (312 aa)). The tract at residues 119 to 153 (KEQIKCLNNRFASFINKVRFLEQKNKLLETKWNFM) is coil 1A. A linker 1 region spans residues 154–163 (QQQRSCQSNM). Positions 164–264 (EPLFEGYICA…FEEEIGLLQS (101 aa)) are coil 1B. The interval 265-281 (QISETSVIVKMDNSREL) is linker 12. Positions 282 to 425 (DVDGIVAEIK…ATYRRLLEGE (144 aa)) are coil 2. The tail stretch occupies residues 426–516 (EHRLCEGIGP…VGVGSNSCSR (91 aa)).

Belongs to the intermediate filament family. In terms of assembly, heterotetramer of two type I and two type II keratins.

The protein is Keratin, type II cuticular Hb2 (Krt82) of Mus musculus (Mouse).